We begin with the raw amino-acid sequence, 105 residues long: Ig lambda chain C region (105 aa).

In terms of domain architecture, Ig-like spans 6 to 100; it reads PSVILFPPSS…EGHTVEKSLA (95 aa). Cysteines 27 and 86 form a disulfide.

The sequence is that of Ig lambda chain C region from Oryctolagus cuniculus (Rabbit).